We begin with the raw amino-acid sequence, 203 residues long: Orotate phosphoribosyltransferase (203 aa).

Residues Arg-94, Lys-98, His-100, and Glu-120–Ser-128 each bind 5-phospho-alpha-D-ribose 1-diphosphate. An orotate-binding site is contributed by Ser-124.

The protein belongs to the purine/pyrimidine phosphoribosyltransferase family. PyrE subfamily. As to quaternary structure, homodimer. The cofactor is Mg(2+).

It carries out the reaction orotidine 5'-phosphate + diphosphate = orotate + 5-phospho-alpha-D-ribose 1-diphosphate. It participates in pyrimidine metabolism; UMP biosynthesis via de novo pathway; UMP from orotate: step 1/2. Functionally, catalyzes the transfer of a ribosyl phosphate group from 5-phosphoribose 1-diphosphate to orotate, leading to the formation of orotidine monophosphate (OMP). The sequence is that of Orotate phosphoribosyltransferase from Staphylococcus saprophyticus subsp. saprophyticus (strain ATCC 15305 / DSM 20229 / NCIMB 8711 / NCTC 7292 / S-41).